Here is a 189-residue protein sequence, read N- to C-terminus: Ribosome maturation factor RimM (189 aa).

One can recognise a PRC barrel domain in the interval 96–169 (EDEFYYADLE…TLLIDPLAAG (74 aa)).

Belongs to the RimM family. In terms of assembly, binds ribosomal protein uS19.

It is found in the cytoplasm. Its function is as follows. An accessory protein needed during the final step in the assembly of 30S ribosomal subunit, possibly for assembly of the head region. Essential for efficient processing of 16S rRNA. May be needed both before and after RbfA during the maturation of 16S rRNA. It has affinity for free ribosomal 30S subunits but not for 70S ribosomes. In Rhizobium johnstonii (strain DSM 114642 / LMG 32736 / 3841) (Rhizobium leguminosarum bv. viciae), this protein is Ribosome maturation factor RimM.